Reading from the N-terminus, the 151-residue chain is Nucleoside diphosphate kinase (151 aa).

6 residues coordinate ATP: Lys-11, Phe-59, Arg-87, Thr-93, Arg-104, and Asn-114. The active-site Pros-phosphohistidine intermediate is the His-117.

This sequence belongs to the NDK family. In terms of assembly, homotetramer. The cofactor is Mg(2+).

It is found in the cytoplasm. It catalyses the reaction a 2'-deoxyribonucleoside 5'-diphosphate + ATP = a 2'-deoxyribonucleoside 5'-triphosphate + ADP. It carries out the reaction a ribonucleoside 5'-diphosphate + ATP = a ribonucleoside 5'-triphosphate + ADP. Functionally, major role in the synthesis of nucleoside triphosphates other than ATP. The ATP gamma phosphate is transferred to the NDP beta phosphate via a ping-pong mechanism, using a phosphorylated active-site intermediate. This is Nucleoside diphosphate kinase from Prochlorococcus marinus (strain NATL1A).